Here is a 248-residue protein sequence, read N- to C-terminus: Tabinhibitin 10 (248 aa).

A signal peptide spans 1–22 (MTLKRIFCAALALIVLQSVASA). In terms of domain architecture, SCP spans 66–208 (LQKTNWLRGV…NYKGAFHCSL (143 aa)). The Cell attachment site motif lies at 221–223 (RGD).

Belongs to the CRISP family. In terms of tissue distribution, expressed in salivary glands.

The protein resides in the secreted. Functionally, inhibits platelet aggregation induced by all agonists tested (ADP, arachidonic acid, the thromboxane A2 analog U46619, thrombin, and snake venom snaclecs (TMVA that activates platelet through GPIB, and stejnulxin that specifically acts through GPVI (GP6))). May act by competing with fibrinogen for binding to glycoprotein IIb/IIIa (ITGA2B/ITGB3). The polypeptide is Tabinhibitin 10 (Tabanus yao (Horsefly)).